Consider the following 522-residue polypeptide: Transactivator/viroplasmin protein (522 aa).

Positions 487 to 500 are enriched in basic and acidic residues; sequence KDASTDRGTTDKDG. Residues 487 to 522 form a disordered region; that stretch reads KDASTDRGTTDKDGPPPTRSIVEKEDVPTTSSKQVD.

It belongs to the caulimoviridae viroplasmin family.

Its subcellular location is the host cytoplasm. Functionally, enhances the ribosomal termination-reinitiation event leading to the translation of major open reading frames on the polycistronic viral RNAs. This Arabidopsis thaliana (Mouse-ear cress) protein is Transactivator/viroplasmin protein.